The primary structure comprises 439 residues: 26S proteasome regulatory subunit 6A (439 aa).

Methionine 1 carries the post-translational modification N-acetylmethionine. Phosphoserine is present on serine 9. An ATP-binding site is contributed by glycine 227–threonine 234. Serine 376 carries the phosphoserine modification.

It belongs to the AAA ATPase family. In terms of assembly, component of the 19S proteasome regulatory particle complex. The 26S proteasome consists of a 20S core particle (CP) and two 19S regulatory subunits (RP). The regulatory particle is made of a lid composed of 9 subunits, a base containing 6 ATPases including PSMC3 and few additional components. Interacts with PAAF1. As to quaternary structure, (Microbial infection) Interacts with HIV-1 Tat. In terms of processing, sumoylated by UBE2I in response to MEKK1-mediated stimuli.

It localises to the cytoplasm. The protein localises to the nucleus. In terms of biological role, component of the 26S proteasome, a multiprotein complex involved in the ATP-dependent degradation of ubiquitinated proteins. This complex plays a key role in the maintenance of protein homeostasis by removing misfolded or damaged proteins, which could impair cellular functions, and by removing proteins whose functions are no longer required. Therefore, the proteasome participates in numerous cellular processes, including cell cycle progression, apoptosis, or DNA damage repair. PSMC3 belongs to the heterohexameric ring of AAA (ATPases associated with diverse cellular activities) proteins that unfolds ubiquitinated target proteins that are concurrently translocated into a proteolytic chamber and degraded into peptides. The chain is 26S proteasome regulatory subunit 6A (PSMC3) from Homo sapiens (Human).